Reading from the N-terminus, the 531-residue chain is Polypyrimidine tract-binding protein 2 (531 aa).

N-acetylmethionine is present on Met1. Residues Ser26 and Ser27 each carry the phosphoserine modification. RRM domains lie at Arg59–His133 and Leu181–Leu257. Ser308 bears the Phosphoserine mark. RRM domains follow at residues Thr338 to His412 and Ala455 to Ser529.

As to quaternary structure, monomer. Interacts with NOVA1; the interaction is direct. Identified in a mRNP complex, at least composed of DHX9, DDX3X, ELAVL1, HNRNPU, IGF2BP1, ILF3, PABPC1, PCBP2, PTBP2, STAU1, STAU2, SYNCRIP and YBX1. Part of a ternary complex containing KHSRP and HNRPH1. Interacts with NOVA2; the interaction is direct. As to expression, mainly expressed in brain although also detected in other tissues like heart and skeletal muscle. Isoform 1 and isoform 2 are specifically expressed in neuronal tissues. Isoform 3 and isoform 4 are expressed in non-neuronal tissues. Isoform 5 and isoform 6 are truncated forms expressed in non-neuronal tissues.

Its subcellular location is the nucleus. In terms of biological role, RNA-binding protein which binds to intronic polypyrimidine tracts and mediates negative regulation of exons splicing. May antagonize in a tissue-specific manner the ability of NOVA1 to activate exon selection. In addition to its function in pre-mRNA splicing, plays also a role in the regulation of translation. Its function is as follows. Reduced affinity for RNA. The polypeptide is Polypyrimidine tract-binding protein 2 (Homo sapiens (Human)).